We begin with the raw amino-acid sequence, 488 residues long: Putative sugar transporter ERD6-like 13 (488 aa).

12 helical membrane-spanning segments follow: residues 51–71 (LILL…GTAA), 89–109 (LAEF…GAAM), 116–138 (VFGR…LMIA), 151–171 (LFLG…IVEI), 182–202 (AINS…GSVI), 207–227 (LALI…FIPE), 291–311 (VGIG…TFYL), 324–344 (VGVM…IVIV), 353–373 (LTVA…SFLF), 390–410 (GVLV…WVMI), 423–445 (GTLC…NFLF), and 451–471 (GVFF…MKMV).

The protein belongs to the major facilitator superfamily. Sugar transporter (TC 2.A.1.1) family.

It localises to the membrane. Sugar transporter. The chain is Putative sugar transporter ERD6-like 13 from Arabidopsis thaliana (Mouse-ear cress).